Consider the following 115-residue polypeptide: Ribonuclease P protein component (115 aa).

It belongs to the RnpA family. Consists of a catalytic RNA component (M1 or rnpB) and a protein subunit.

The enzyme catalyses Endonucleolytic cleavage of RNA, removing 5'-extranucleotides from tRNA precursor.. Functionally, RNaseP catalyzes the removal of the 5'-leader sequence from pre-tRNA to produce the mature 5'-terminus. It can also cleave other RNA substrates such as 4.5S RNA. The protein component plays an auxiliary but essential role in vivo by binding to the 5'-leader sequence and broadening the substrate specificity of the ribozyme. This chain is Ribonuclease P protein component, found in Bacillus cereus (strain 03BB102).